Here is a 98-residue protein sequence, read N- to C-terminus: DNA-directed RNA polymerase subunit omega (98 aa).

This sequence belongs to the RNA polymerase subunit omega family. In terms of assembly, the RNAP catalytic core consists of 2 alpha, 1 beta, 1 beta' and 1 omega subunit. When a sigma factor is associated with the core the holoenzyme is formed, which can initiate transcription.

The catalysed reaction is RNA(n) + a ribonucleoside 5'-triphosphate = RNA(n+1) + diphosphate. In terms of biological role, promotes RNA polymerase assembly. Latches the N- and C-terminal regions of the beta' subunit thereby facilitating its interaction with the beta and alpha subunits. The polypeptide is DNA-directed RNA polymerase subunit omega (Tropheryma whipplei (strain Twist) (Whipple's bacillus)).